Consider the following 715-residue polypeptide: Probable serine/threonine-protein kinase MARK-B (715 aa).

Over residues 24–37 (SCSSNSTTSSSSNS) the composition is skewed to low complexity. Residues 24-65 (SCSSNSTTSSSSNSPKQNKVSPGYRNKPQQQQHKKGHKMGNY) are disordered. Residues 65–320 (YLLGKTIGSG…LDEIKTHVWV (256 aa)) enclose the Protein kinase domain. ATP-binding positions include 71–79 (IGSGTSSKV) and lysine 94. Aspartate 187 serves as the catalytic Proton acceptor. Basic and acidic residues predominate over residues 335–344 (KVSDRLEKEQ). Disordered stretches follow at residues 335–399 (KVSD…IPQN) and 446–530 (CSAP…HHST). Over residues 345 to 368 (QQQTPQHQQTQQQLQPQSQLQQHS) the composition is skewed to low complexity. The segment covering 381–399 (IGSNRPLNQSSPNLTIPQN) has biased composition (polar residues). Low complexity-rich tracts occupy residues 451 to 478 (SPHSISPQFISPSPSTSTTPPLSPLSVS) and 487 to 513 (SSNPNIGHIPNNNHNSLSSSQNNINTS). Positions 517-527 (QYHHHHHHQNH) are enriched in basic residues. Residues 666 to 715 (LCPRNETINFEIEVCKVNGMDMYGIKFKRLSGDAWSYSSSCIKIVESLKL) form the KA1 domain.

It belongs to the protein kinase superfamily. CAMK Ser/Thr protein kinase family. SNF1 subfamily.

The enzyme catalyses L-seryl-[protein] + ATP = O-phospho-L-seryl-[protein] + ADP + H(+). The catalysed reaction is L-threonyl-[protein] + ATP = O-phospho-L-threonyl-[protein] + ADP + H(+). This is Probable serine/threonine-protein kinase MARK-B (mrkB) from Dictyostelium discoideum (Social amoeba).